The primary structure comprises 995 residues: ATP-dependent RNA helicase DBP10 (995 aa).

A disordered region spans residues 1–120 (MAGVQKRKRD…TQTGDDEDDV (120 aa)). 2 stretches are compositionally biased toward acidic residues: residues 12 to 25 (EDQD…DDIA) and 37 to 50 (SESD…EVEA). A compositionally biased stretch (basic and acidic residues) spans 71-81 (VNNKKKAENKD). Residue Ser-101 is modified to Phosphoserine. A Q motif motif is present at residues 137 to 165 (GSFPSFGLSKIVLNNIKRKGFRQPTPIQR). A Helicase ATP-binding domain is found at 168-340 (IPLILQSRDI…KAGLVNPVLV (173 aa)). 181–188 (ARTGSGKT) provides a ligand contact to ATP. The short motif at 288-291 (DEAD) is the DEAD box element. Disordered regions lie at residues 389–427 (LQNS…PAAN) and 889–973 (GSRE…EQIR). Phosphoserine occurs at positions 398 and 400. Basic residues-rich tracts occupy residues 407 to 422 (QKKR…RKQK) and 914 to 924 (VRGKFKHKQMK). Residues 418-568 (FRKQKMPAAN…PMYDSLVDVM (151 aa)) form the Helicase C-terminal domain. Over residues 964 to 973 (SELKSTEQIR) the composition is skewed to basic and acidic residues.

The protein belongs to the DEAD box helicase family. DDX54/DBP10 subfamily. As to quaternary structure, interacts with RRP1 and associates with pre-ribosomal particles.

It localises to the nucleus. It is found in the nucleolus. The catalysed reaction is ATP + H2O = ADP + phosphate + H(+). Its function is as follows. ATP-binding RNA helicase involved in the biogenesis of 60S ribosomal subunits and is required for the normal formation of 25S and 5.8S rRNAs. This is ATP-dependent RNA helicase DBP10 (DBP10) from Saccharomyces cerevisiae (strain ATCC 204508 / S288c) (Baker's yeast).